We begin with the raw amino-acid sequence, 378 residues long: Probable serine/threonine-protein kinase PBL7 (378 aa).

The segment at 1–49 (MGWIPCSGKSSGRNKTRRNGDHKLDRKSSDCSVSTSEKSRAKSSLSESK) is disordered. The N-myristoyl glycine moiety is linked to residue G2. Positions 18–29 (RNGDHKLDRKSS) are enriched in basic and acidic residues. Positions 32–47 (SVSTSEKSRAKSSLSE) are enriched in low complexity. T62 carries the phosphothreonine modification. The Protein kinase domain maps to 73–350 (FRKECLIGEG…ADVVTALSYL (278 aa)). Residues 79-87 (IGEGGFGRV) and K102 each bind ATP. A Phosphotyrosine modification is found at Y147. The active-site Proton acceptor is D200. 2 positions are modified to phosphoserine: S204 and S234. Residues T235 and T240 each carry the phosphothreonine modification. Position 248 is a phosphotyrosine (Y248).

Belongs to the protein kinase superfamily. Ser/Thr protein kinase family. As to quaternary structure, interacts with BSU1 and BSL1. In terms of processing, phosphorylated at Ser-43, Ser-46 and Ser-234. As to expression, widely expressed.

Its subcellular location is the cell membrane. The enzyme catalyses L-seryl-[protein] + ATP = O-phospho-L-seryl-[protein] + ADP + H(+). The catalysed reaction is L-threonyl-[protein] + ATP = O-phospho-L-threonyl-[protein] + ADP + H(+). Its function is as follows. Serine/threonine-protein kinase involved in the positive regulation of brassinosteroid (BR) signaling and plant growth. Phosphorylates both BSU1 and BSL1 in vitro. The polypeptide is Probable serine/threonine-protein kinase PBL7 (Arabidopsis thaliana (Mouse-ear cress)).